The following is a 191-amino-acid chain: Nascent polypeptide-associated complex subunit alpha (191 aa).

One can recognise an NAC-A/B domain in the interval 24–89 (SRPERKARKA…AKVEDPNSAA (66 aa)). The disordered stretch occupies residues 126-149 (QDAPSADSSAPAPSGEATDASASG). Positions 127-139 (DAPSADSSAPAPS) are enriched in low complexity. The region spanning 153–191 (VSDEEIQLIVAQTGVDEAKAREAYISEKGDLINAIMKLQ) is the UBA domain.

Belongs to the NAC-alpha family. Part of the nascent polypeptide-associated complex (NAC), consisting of EGD2 and EGD1. NAC associates with ribosomes via EGD1.

The protein resides in the cytoplasm. It is found in the nucleus. Component of the nascent polypeptide-associated complex (NAC), a dynamic component of the ribosomal exit tunnel, protecting the emerging polypeptides from interaction with other cytoplasmic proteins to ensure appropriate nascent protein targeting. The NAC complex also promotes mitochondrial protein import by enhancing productive ribosome interactions with the outer mitochondrial membrane and blocks the inappropriate interaction of ribosomes translating non-secretory nascent polypeptides with translocation sites in the membrane of the endoplasmic reticulum. EGD2 may also be involved in transcription regulation. This Cryptococcus neoformans var. neoformans serotype D (strain B-3501A) (Filobasidiella neoformans) protein is Nascent polypeptide-associated complex subunit alpha (EGD2).